The sequence spans 777 residues: Homoaconitase, mitochondrial (777 aa).

A mitochondrion-targeting transit peptide spans 1–35 (MFKRTGSLLLRCRASRVPVIGRPLISLSTSSTSLS). Residues 47 to 74 (LRRYTEASSSTTQTSPSSSSWPAPDAAP) form a disordered region. Over residues 52 to 74 (EASSSTTQTSPSSSSWPAPDAAP) the composition is skewed to low complexity. [4Fe-4S] cluster contacts are provided by Cys-398, Cys-466, and Cys-469.

Belongs to the aconitase/IPM isomerase family. It depends on [4Fe-4S] cluster as a cofactor.

It is found in the mitochondrion. It carries out the reaction (2R,3S)-homoisocitrate = cis-homoaconitate + H2O. It participates in amino-acid biosynthesis; L-lysine biosynthesis via AAA pathway; L-alpha-aminoadipate from 2-oxoglutarate: step 3/5. Functionally, catalyzes the reversible hydration of cis-homoaconitate to (2R,3S)-homoisocitrate, a step in the alpha-aminoadipate pathway for lysine biosynthesis. This Aspergillus fumigatus (strain ATCC MYA-4609 / CBS 101355 / FGSC A1100 / Af293) (Neosartorya fumigata) protein is Homoaconitase, mitochondrial (lys4).